The sequence spans 178 residues: Small ribosomal subunit protein uS5 (178 aa).

Residues 15–78 (FEEKIIEIRR…ADAKKNVIEV (64 aa)) form the S5 DRBM domain.

The protein belongs to the universal ribosomal protein uS5 family. In terms of assembly, part of the 30S ribosomal subunit. Contacts proteins S4 and S8.

Functionally, with S4 and S12 plays an important role in translational accuracy. Its function is as follows. Located at the back of the 30S subunit body where it stabilizes the conformation of the head with respect to the body. In Thermotoga neapolitana (strain ATCC 49049 / DSM 4359 / NBRC 107923 / NS-E), this protein is Small ribosomal subunit protein uS5.